The chain runs to 97 residues: Large ribosomal subunit protein eL21 (97 aa).

This sequence belongs to the eukaryotic ribosomal protein eL21 family.

This is Large ribosomal subunit protein eL21 from Methanoculleus marisnigri (strain ATCC 35101 / DSM 1498 / JR1).